The primary structure comprises 162 residues: Anaerobic nitrite reductase GLB1 (162 aa).

Residues 9 to 159 form the Globin domain; the sequence is VFSEEKEALV…LVAAIKQEMK (151 aa). A Homodimerization motif is present at residues 42–46; sequence EIAPS. Heme b is bound by residues K66, H70, R100, T104, and H105. The Homodimerization signature appears at 112–124; sequence DGHFEVTRFALLE.

The protein belongs to the plant globin family. Homodimer. Requires heme b as cofactor. Seeds and roots.

The protein resides in the cytoplasm. Its subcellular location is the nucleus. The catalysed reaction is Fe(III)-heme b-[protein] + nitric oxide + H2O = Fe(II)-heme b-[protein] + nitrite + 2 H(+). Its function is as follows. Phytoglobin that reduces nitrite to nitric oxide (NO) under anoxic conditions (e.g. during flooding or in waterlogged soil). May not function as an oxygen storage or transport protein. Has an unusually high affinity for O(2) through an hexacoordinate heme iron because of a very low dissociation constant. The polypeptide is Anaerobic nitrite reductase GLB1 (Hordeum vulgare (Barley)).